The sequence spans 250 residues: Protein BTG4 (250 aa).

The protein belongs to the BTG family. As to quaternary structure, interacts with CNOT7 and EIF4E. Interacts with CNOT8. As to expression, expressed in oocytes. Expressed in testis and in olfactory epithelium.

Functionally, adapter protein that bridges CNOT7, a catalytic subunit of the CCR4-NOT complex, to EIF4E, and facilitates maternal mRNAs decay during the maturation of oocytes and in the fertilized egg. It is therefore required for the maternal-zygotic transition (MZT), zygotic cleavage and initiation of embryonic development. The sequence is that of Protein BTG4 (Btg4) from Mus musculus (Mouse).